The sequence spans 740 residues: Eukaryotic translation initiation factor 3 subunit B (740 aa).

Residues 1 to 10 (MAPSFDTLSE) are compositionally biased toward polar residues. Positions 1-20 (MAPSFDTLSEQDLHEEEEEE) are disordered. The 87-residue stretch at 40–126 (TFVVIDGLPV…HTLLVNKLMD (87 aa)) folds into the RRM domain. WD repeat units lie at residues 193–230 (AHWT…KQKQ), 232–289 (PHPF…RSFV), 302–343 (EPKK…LLGK), 455–496 (SLKD…SFFA), 513–556 (IEKK…EKPE), and 571–609 (IEHY…HTFA). The interval 695–721 (DAYGLPEEADDPKLAKDAAATTQEQGE) is disordered.

It belongs to the eIF-3 subunit B family. As to quaternary structure, component of the eukaryotic translation initiation factor 3 (eIF-3) complex.

The protein resides in the cytoplasm. Its function is as follows. RNA-binding component of the eukaryotic translation initiation factor 3 (eIF-3) complex, which is involved in protein synthesis of a specialized repertoire of mRNAs and, together with other initiation factors, stimulates binding of mRNA and methionyl-tRNAi to the 40S ribosome. The eIF-3 complex specifically targets and initiates translation of a subset of mRNAs involved in cell proliferation. This is Eukaryotic translation initiation factor 3 subunit B (prt1) from Neosartorya fischeri (strain ATCC 1020 / DSM 3700 / CBS 544.65 / FGSC A1164 / JCM 1740 / NRRL 181 / WB 181) (Aspergillus fischerianus).